The chain runs to 300 residues: MSPCYGQNSAIAKGSWNREVLQEVQPIYHWHDFGQNMKEYSASPLEGDSSLPSSLPSSTEDCLLLSLENTITVIAGNQRQAYDSTSSTEEGTAPQLRPDEIADSTHCITSLVDPEFRDLINYGRQKGANPVFIESNTTEQSHSQCILGYPQKSHVAQLYHDPKVLSTISEGQTKRGSYHCSHCSEKFATLVEFAAHLDEFNLERPCKCPIEQCPWKILGFQQATGLRRHCASQHIGELDIEMEKSLNLKVEKYPGLNCPFPICQKTFRRKDAYKRHVAMVHNNADSRFNKRLKKILNNTK.

Over residues 80 to 90 the composition is skewed to polar residues; sequence QAYDSTSSTEE. Positions 80–100 are disordered; the sequence is QAYDSTSSTEEGTAPQLRPDE. C2H2-type zinc fingers lie at residues 178 to 199, 206 to 234, and 256 to 281; these read YHCSHCSEKFATLVEFAAHLDE, CKCPIEQCPWKILGFQQATGLRRHCASQH, and LNCPFPICQKTFRRKDAYKRHVAMVH.

Its subcellular location is the nucleus. Involved in the control of meiosis. Represses the transcription of the IME1 gene thereby inhibiting cells from entering meiosis. But also activates the CLN2 gene thus promoting mitosis. The sequence is that of Zinc finger protein RME1 (RME1) from Saccharomyces cerevisiae (strain ATCC 204508 / S288c) (Baker's yeast).